A 199-amino-acid polypeptide reads, in one-letter code: Isopentenyl-diphosphate Delta-isomerase (199 aa).

Positions 40 and 47 each coordinate Mn(2+). Positions 45–186 (PRHLAFSCHV…PALLSPWAVE (142 aa)) constitute a Nudix hydrolase domain. Cysteine 82 is an active-site residue. Cysteine 82 contacts Mg(2+). Histidine 84 provides a ligand contact to Mn(2+). Residue glutamate 102 coordinates Mg(2+). Mn(2+)-binding residues include glutamate 131 and glutamate 133. Residue glutamate 133 is part of the active site.

The protein belongs to the IPP isomerase type 1 family. Mg(2+) serves as cofactor. Mn(2+) is required as a cofactor.

Its subcellular location is the cytoplasm. It catalyses the reaction isopentenyl diphosphate = dimethylallyl diphosphate. Its pathway is isoprenoid biosynthesis; dimethylallyl diphosphate biosynthesis; dimethylallyl diphosphate from isopentenyl diphosphate: step 1/1. In terms of biological role, catalyzes the 1,3-allylic rearrangement of the homoallylic substrate isopentenyl (IPP) to its highly electrophilic allylic isomer, dimethylallyl diphosphate (DMAPP). This Cutibacterium acnes (strain DSM 16379 / KPA171202) (Propionibacterium acnes) protein is Isopentenyl-diphosphate Delta-isomerase.